We begin with the raw amino-acid sequence, 200 residues long: Recombination protein RecR (200 aa).

Residues 59 to 74 form a C4-type zinc finger; that stretch reads CEKCNTFTEAQVCEVC. Residues 82–177 form the Toprim domain; sequence ALLCVVETPA…AVTRLARGVP (96 aa).

Belongs to the RecR family.

In terms of biological role, may play a role in DNA repair. It seems to be involved in an RecBC-independent recombinational process of DNA repair. It may act with RecF and RecO. The chain is Recombination protein RecR from Burkholderia pseudomallei (strain 1106a).